The chain runs to 440 residues: Gap junction alpha-8 protein (440 aa).

An intramembrane segment occupies 2–12; that stretch reads GDWSFLGNILE. The Cytoplasmic segment spans residues 13–21; it reads EVNEHSTVI. A helical transmembrane segment spans residues 22 to 42; that stretch reads GRVWLTVLFIFRILILGTAAE. Topologically, residues 43 to 71 are extracellular; that stretch reads FVWGDEQSDFVCNTQQPGCENVCYDEAFP. 3 disulfides stabilise this stretch: Cys-54-Cys-201, Cys-61-Cys-195, and Cys-65-Cys-190. Residues 72–92 form a helical membrane-spanning segment; it reads ISHIRLWVLQIIFVSTPSLMY. Residues 93–161 lie on the Cytoplasmic side of the membrane; sequence VGHAVHHVRM…GTLLRTYVCH (69 aa). The segment at 111–143 is disordered; the sequence is AEELCQQSRSNGGERVPIAPDQASIRKSSSSSK. A helical transmembrane segment spans residues 162–182; it reads IIFKTLFEVGFIVGHYFLYGF. At 183–210 the chain is on the extracellular side; it reads RILPLYRCSRWPCPNVVDCFVSRPTEKT. Residues 211 to 231 form a helical membrane-spanning segment; sequence IFILFMLSVAFVSLFLNIMEM. Residues 232–440 lie on the Cytoplasmic side of the membrane; sequence SHLGMKGIRS…SRARSDDLTI (209 aa). The segment at 334–440 is disordered; that stretch reads GAQEVEREEQ…SRARSDDLTI (107 aa). Basic and acidic residues-rich tracts occupy residues 353 to 364 and 375 to 399; these read VGEKKQEAEKVA and DGEK…EKVT. The segment covering 423–432 has biased composition (low complexity); it reads LSRLSKASSR.

This sequence belongs to the connexin family. Alpha-type (group II) subfamily. As to quaternary structure, a hemichannel or connexon is composed of a hexamer of connexins. A functional gap junction is formed by the apposition of two hemichannels. Forms heteromeric channels with GJA3. As to expression, detected in eye lens (at protein level).

The protein localises to the cell membrane. It is found in the cell junction. It localises to the gap junction. Its function is as follows. Structural component of eye lens gap junctions. Gap junctions are dodecameric channels that connect the cytoplasm of adjoining cells. They are formed by the docking of two hexameric hemichannels, one from each cell membrane. Small molecules and ions diffuse from one cell to a neighboring cell via the central pore. The sequence is that of Gap junction alpha-8 protein (Gja8) from Rattus norvegicus (Rat).